Reading from the N-terminus, the 73-residue chain is Translation initiation factor IF-1 3 (73 aa).

Residues 1-72 (MAKEELVEFG…TKGRINYRHK (72 aa)) form the S1-like domain.

Belongs to the IF-1 family. Component of the 30S ribosomal translation pre-initiation complex which assembles on the 30S ribosome in the order IF-2 and IF-3, IF-1 and N-formylmethionyl-tRNA(fMet); mRNA recruitment can occur at any time during PIC assembly.

It is found in the cytoplasm. One of the essential components for the initiation of protein synthesis. Stabilizes the binding of IF-2 and IF-3 on the 30S subunit to which N-formylmethionyl-tRNA(fMet) subsequently binds. Helps modulate mRNA selection, yielding the 30S pre-initiation complex (PIC). Upon addition of the 50S ribosomal subunit IF-1, IF-2 and IF-3 are released leaving the mature 70S translation initiation complex. The sequence is that of Translation initiation factor IF-1 3 from Cupriavidus pinatubonensis (strain JMP 134 / LMG 1197) (Cupriavidus necator (strain JMP 134)).